We begin with the raw amino-acid sequence, 254 residues long: MNTEVIAIIPARFASSRFPGKPLADMLGKSMIQRVHERIVGVVPRAVVATDDERIRQAVEDFGGEVVMTSPECSSGTERCREAFDKVGRGEKIVLNLQGDEPFIQKEQIDLLISAFDKPETDIATLAEVFSSDVSFERLNNPNSPKIVLDHGGYALYFSRSVIPYLRGVQPDSWCRRHTYYKHIGIYAFRPTVLRKITSLPQSTAEQAESLEQLRWLEYGYRIRVLQTQQSTIGIDTPEDMEKAIAYLRSQGME.

The protein belongs to the KdsB family.

Its subcellular location is the cytoplasm. The enzyme catalyses 3-deoxy-alpha-D-manno-oct-2-ulosonate + CTP = CMP-3-deoxy-beta-D-manno-octulosonate + diphosphate. It participates in nucleotide-sugar biosynthesis; CMP-3-deoxy-D-manno-octulosonate biosynthesis; CMP-3-deoxy-D-manno-octulosonate from 3-deoxy-D-manno-octulosonate and CTP: step 1/1. It functions in the pathway bacterial outer membrane biogenesis; lipopolysaccharide biosynthesis. In terms of biological role, activates KDO (a required 8-carbon sugar) for incorporation into bacterial lipopolysaccharide in Gram-negative bacteria. In Porphyromonas gingivalis (strain ATCC BAA-308 / W83), this protein is 3-deoxy-manno-octulosonate cytidylyltransferase.